A 98-amino-acid chain; its full sequence is Dehydrin HIRD11 (98 aa).

The tract at residues M1–D98 is disordered. Residues K19–K72 are compositionally biased toward basic and acidic residues. Positions K73–K82 are enriched in basic residues.

The protein belongs to the KS-type dehydrin family. As to quaternary structure, interacts with PXL1. Post-translationally, phosphorylated in vivo. Phosphorylated in vitro by PXL1. In terms of tissue distribution, highly expressed in the cambial zone of the stem vasculature (at protein level). Expressed in roots, rosettes leaves, stems, cauline leaves, flowers and siliques.

Its subcellular location is the cytoplasm. It is found in the nucleus. Intrinsically disordered and metal-binding protein. Binds to the divalent cations cobalt, nickel, copper and zinc, but not to magnesium, calcium, manganese or cadmium. Binding to metal ions decreases disordered state, decreases susceptibility to trypsin and promotes self-association. Can reduce the formation of reactive oxygen species (ROS) in a copper-ascorbate in vitro system. The polypeptide is Dehydrin HIRD11 (Arabidopsis thaliana (Mouse-ear cress)).